Reading from the N-terminus, the 469-residue chain is Neuraminidase (469 aa).

Over 1–9 (MNPNQKIIT) the chain is Intravirion. A helical membrane pass occupies residues 10-30 (IGSVSLTIATVCFLMQIAILV). Positions 11 to 33 (GSVSLTIATVCFLMQIAILVTTV) are involved in apical transport and lipid raft association. Residues 31–469 (TTVTLHFRQY…DGADINLMPI (439 aa)) are Virion surface-facing. The tract at residues 36 to 88 (HFRQYECDSPANNQVMPCEPTIIERNITEIVYLNNTTIEKEICPKLVEYRNWS) is hypervariable stalk region. N-linked (GlcNAc...) asparagine; by host glycans are attached at residues Asn-61, Asn-69, Asn-70, and Asn-86. The segment at 91–469 (QCKITGFAPF…DGADINLMPI (379 aa)) is head of neuraminidase. Cystine bridges form between Cys-92–Cys-417, Cys-124–Cys-129, Cys-183–Cys-230, Cys-232–Cys-237, Cys-278–Cys-291, Cys-280–Cys-289, Cys-318–Cys-337, and Cys-421–Cys-447. A substrate-binding site is contributed by Arg-118. An N-linked (GlcNAc...) asparagine; by host glycan is attached at Asn-146. Catalysis depends on Asp-151, which acts as the Proton donor/acceptor. Arg-152 provides a ligand contact to substrate. Asn-200 and Asn-234 each carry an N-linked (GlcNAc...) asparagine; by host glycan. Substrate is bound at residue 276–277 (EE). Arg-292 contributes to the substrate binding site. The Ca(2+) site is built by Asp-293, Gly-297, and Asp-324. Residues 323–350 (GDTPRNNDRSSNSNCRNPNNERGNHGVK) are disordered. Residues 331–343 (RSSNSNCRNPNNE) are compositionally biased toward low complexity. Arg-371 is a substrate binding site. N-linked (GlcNAc...) asparagine; by host glycosylation is present at Asn-402. Tyr-406 acts as the Nucleophile in catalysis.

It belongs to the glycosyl hydrolase 34 family. As to quaternary structure, homotetramer. Ca(2+) serves as cofactor. In terms of processing, N-glycosylated.

It localises to the virion membrane. Its subcellular location is the host apical cell membrane. It catalyses the reaction Hydrolysis of alpha-(2-&gt;3)-, alpha-(2-&gt;6)-, alpha-(2-&gt;8)- glycosidic linkages of terminal sialic acid residues in oligosaccharides, glycoproteins, glycolipids, colominic acid and synthetic substrates.. Inhibited by the neuraminidase inhibitors zanamivir (Relenza) and oseltamivir (Tamiflu). These drugs interfere with the release of progeny virus from infected cells and are effective against all influenza strains. Resistance to neuraminidase inhibitors is quite rare. In terms of biological role, catalyzes the removal of terminal sialic acid residues from viral and cellular glycoconjugates. Cleaves off the terminal sialic acids on the glycosylated HA during virus budding to facilitate virus release. Additionally helps virus spread through the circulation by further removing sialic acids from the cell surface. These cleavages prevent self-aggregation and ensure the efficient spread of the progeny virus from cell to cell. Otherwise, infection would be limited to one round of replication. Described as a receptor-destroying enzyme because it cleaves a terminal sialic acid from the cellular receptors. May facilitate viral invasion of the upper airways by cleaving the sialic acid moieties on the mucin of the airway epithelial cells. Likely to plays a role in the budding process through its association with lipid rafts during intracellular transport. May additionally display a raft-association independent effect on budding. Plays a role in the determination of host range restriction on replication and virulence. Sialidase activity in late endosome/lysosome traffic seems to enhance virus replication. The sequence is that of Neuraminidase from Aves (Human).